Here is a 158-residue protein sequence, read N- to C-terminus: SsrA-binding protein (158 aa).

It belongs to the SmpB family.

The protein localises to the cytoplasm. Required for rescue of stalled ribosomes mediated by trans-translation. Binds to transfer-messenger RNA (tmRNA), required for stable association of tmRNA with ribosomes. tmRNA and SmpB together mimic tRNA shape, replacing the anticodon stem-loop with SmpB. tmRNA is encoded by the ssrA gene; the 2 termini fold to resemble tRNA(Ala) and it encodes a 'tag peptide', a short internal open reading frame. During trans-translation Ala-aminoacylated tmRNA acts like a tRNA, entering the A-site of stalled ribosomes, displacing the stalled mRNA. The ribosome then switches to translate the ORF on the tmRNA; the nascent peptide is terminated with the 'tag peptide' encoded by the tmRNA and targeted for degradation. The ribosome is freed to recommence translation, which seems to be the essential function of trans-translation. This Bartonella henselae (strain ATCC 49882 / DSM 28221 / CCUG 30454 / Houston 1) (Rochalimaea henselae) protein is SsrA-binding protein.